We begin with the raw amino-acid sequence, 76 residues long: UPF0154 protein Exig_1099 (76 aa).

A helical transmembrane segment spans residues 4–24; that stretch reads WIWILIALLCLVAGVALGFYI. Residues 54–76 form a disordered region; the sequence is KPSQKKVNQVMRSMSGSMKSPKK.

The protein belongs to the UPF0154 family.

The protein localises to the cell membrane. This is UPF0154 protein Exig_1099 from Exiguobacterium sibiricum (strain DSM 17290 / CCUG 55495 / CIP 109462 / JCM 13490 / 255-15).